Here is a 710-residue protein sequence, read N- to C-terminus: DNA ligase (710 aa).

The disordered stretch occupies residues 1–26 (MPEDAIGQQVPPEQEAAGAEPTSAAR). Residues 53 to 57 (DAEFD), 102 to 103 (SL), and glutamate 132 contribute to the NAD(+) site. Residue lysine 134 is the N6-AMP-lysine intermediate of the active site. Positions 155, 196, 312, and 336 each coordinate NAD(+). Residues cysteine 430, cysteine 433, cysteine 449, and cysteine 455 each contribute to the Zn(2+) site. In terms of domain architecture, BRCT spans 619-708 (EGPRPLEGMT…PDAAREVARV (90 aa)).

The protein belongs to the NAD-dependent DNA ligase family. LigA subfamily. Mg(2+) is required as a cofactor. The cofactor is Mn(2+).

The catalysed reaction is NAD(+) + (deoxyribonucleotide)n-3'-hydroxyl + 5'-phospho-(deoxyribonucleotide)m = (deoxyribonucleotide)n+m + AMP + beta-nicotinamide D-nucleotide.. Its function is as follows. DNA ligase that catalyzes the formation of phosphodiester linkages between 5'-phosphoryl and 3'-hydroxyl groups in double-stranded DNA using NAD as a coenzyme and as the energy source for the reaction. It is essential for DNA replication and repair of damaged DNA. This Salinispora arenicola (strain CNS-205) protein is DNA ligase.